Consider the following 224-residue polypeptide: Zinc finger C4H2 domain-containing protein (224 aa).

Residues 12 to 97 (ENIKEIRNKT…NKLLESTRRL (86 aa)) are a coiled coil. Disordered regions lie at residues 166 to 185 (QAAR…QPPP) and 204 to 224 (PLCK…KPDE). The segment at 189–206 (CLSCHQQIHRNAPICPLC) adopts a C4H2-type zinc-finger fold. Basic residues predominate over residues 208 to 224 (AKSRSRNPKKPKRKPDE).

The protein localises to the nucleus. It localises to the cytoplasm. It is found in the postsynaptic cell membrane. Its function is as follows. Plays a role in GABAergic and V2 interneurons differentiation. Involved in motoneuron development and in neuromuscular junction formation. The chain is Zinc finger C4H2 domain-containing protein (zc4h2) from Danio rerio (Zebrafish).